Reading from the N-terminus, the 477-residue chain is Glycogen synthase (477 aa).

Lys-15 contacts ADP-alpha-D-glucose.

It belongs to the glycosyltransferase 1 family. Bacterial/plant glycogen synthase subfamily.

The enzyme catalyses [(1-&gt;4)-alpha-D-glucosyl](n) + ADP-alpha-D-glucose = [(1-&gt;4)-alpha-D-glucosyl](n+1) + ADP + H(+). It participates in glycan biosynthesis; glycogen biosynthesis. Its function is as follows. Synthesizes alpha-1,4-glucan chains using ADP-glucose. The protein is Glycogen synthase of Citrobacter koseri (strain ATCC BAA-895 / CDC 4225-83 / SGSC4696).